A 516-amino-acid polypeptide reads, in one-letter code: Cytochrome P450 monooxygenase ntnM (516 aa).

Residues 22 to 42 (IINVILSIAAIALIRALAISI) traverse the membrane as a helical segment. Position 453 (Cys-453) interacts with heme.

This sequence belongs to the cytochrome P450 family. Requires heme as cofactor.

It is found in the membrane. It participates in secondary metabolite biosynthesis; terpenoid biosynthesis. Functionally, cytochrome P450 monooxygenase; part of the gene cluster that mediates the biosynthesis of the meroterpenoids nectripenoids A and B, as well as cochliquninone D and isocochliquninone E. The pathway probably begins with the HR-PKS ntnH that catalyzes two chain-extension steps to form a reduced triketide, which then primes the SAT domain in the NR-PKS ntnG to initiate three more cycles of extension to give a linear hexaketide corresponding to the polyketide part of nectripenoids. The FAD-dependent monooxygenase ntnJ then performs an oxidative decarboxylation at C11 of the ntnH/ntnG product, via an electrophilic aromatic hydroxylation with concomitant ipso-decarboxylation. The membrane-bound polyprenyl transferase ntnF then introduces a farnesyl group before the FAD-dependent monooxygenase ntnK functions as the first epoxidase on terminal C12'-C13' olefin, followed by a second epoxidation on C7'-C8' catalyzed by ntnA. The terpene cyclase/mutase ntnI then initiates the sequential tricyclic ring formation through protonation of the terminal epoxide and catalyzes the regioselective and stereoselective 6/6/6-tricyclic ring formation. The cytochrome P450 monooxygenase ntnM may then hydroxylate C1'. The sequence is that of Cytochrome P450 monooxygenase ntnM from Nectria sp.